Consider the following 394-residue polypeptide: GDP-mannose transporter (394 aa).

Over 1 to 56 (MSNKKNEDIEMRAVEGANDFGGEKDPFLGRNSPVLRPRGREPTASAYFGKLDNSPG) the chain is Cytoplasmic. The chain crosses the membrane as a helical span at residues 57–77 (ASIIAYCLSSISMTVVNKYVV). Residues 78-81 (SGES) are Lumenal-facing. A helical membrane pass occupies residues 82–102 (WNLNFFYLGVQSLVCTIAILL). At 103–122 (SRQTGLIKNLAPFDSNKAKR) the chain is on the cytoplasmic side. The chain crosses the membrane as a helical span at residues 123–145 (WFPVSLLLVSMIYTGANALQYLS). Residues 146–150 (VPVYT) are Lumenal-facing. Residues 151 to 168 (IFKNLTIIVIAYGEVLWF) traverse the membrane as a helical segment. Topologically, residues 169–174 (GGSVTP) are cytoplasmic. Residues 175–199 (LMLLSFGLMVLSSVVAAWADIQAAI) traverse the membrane as a helical segment. Residues 200–207 (DGVGHSAE) lie on the Lumenal side of the membrane. A helical transmembrane segment spans residues 208-228 (TSAALATLNAGYAWMGLNVVC). Residues 229-249 (TSSYLLGMRKVIKKMNFKDYD) are Cytoplasmic-facing. Residues 250–270 (SMFYNNLLTIPVLVVCSLLVE) traverse the membrane as a helical segment. Topologically, residues 271 to 288 (DWSSENLAKNFPIETRNK) are lumenal. Residues 289–309 (LMVGMIYSGLAAIFISYCSAW) traverse the membrane as a helical segment. At 310-317 (CIRVTSST) the chain is on the cytoplasmic side. The helical transmembrane segment at 318 to 338 (TYSMVGALNKLPIAISGLIFF) threads the bilayer. At 339–341 (DAP) the chain is on the lumenal side. Residues 342-362 (ITFGSITAIAVGFVSGLVFAW) traverse the membrane as a helical segment. Residues 363 to 394 (AKVRQKAQEAGLLPTTKPTMSASAQSNRDANS) lie on the Cytoplasmic side of the membrane.

This sequence belongs to the TPT transporter family. SLC35D subfamily. Homooligomer.

The protein localises to the golgi apparatus membrane. Its subcellular location is the cytoplasmic vesicle membrane. It is found in the endoplasmic reticulum membrane. In terms of biological role, involved in the import of GDP-mannose from the cytoplasm into the Golgi lumen. The sequence is that of GDP-mannose transporter (VRG4) from Chaetomium globosum (strain ATCC 6205 / CBS 148.51 / DSM 1962 / NBRC 6347 / NRRL 1970) (Soil fungus).